Reading from the N-terminus, the 135-residue chain is Probable disulfide formation protein (135 aa).

A helical membrane pass occupies residues 7–26 (SYCLYFAWLVSCIGTLMSVY). Cysteines 36 and 39 form a disulfide. A run of 2 helical transmembrane segments spans residues 41–60 (YQRICLFPLVVILGISAYLD) and 67–84 (YALPLALIGFCIAIYQVC). C96 and C101 are oxidised to a cystine. Residues 109–131 (GFITMPMASALAFFAIANLLIFA) traverse the membrane as a helical segment.

Belongs to the DsbB family. BdbC subfamily.

It is found in the cell inner membrane. Functionally, required for disulfide bond formation in some proteins. The chain is Probable disulfide formation protein from Chlamydia muridarum (strain MoPn / Nigg).